Here is a 689-residue protein sequence, read N- to C-terminus: Pentatricopeptide repeat-containing protein At1g71460, chloroplastic (689 aa).

Residues M1–S49 constitute a chloroplast transit peptide. Residues L16–S68 are disordered. Residues S38–P52 show a composition bias toward low complexity. 18 PPR repeats span residues N75–V109, N110–S144, N145–S175, N176–L212, N213–N247, S248–V282, W283–E309, N315–E350, Q351–R381, N382–P416, D417–P451, N452–R482, N483–P517, D518–S552, I553–K583, G584–P618, N619–M649, and S655–T689.

This sequence belongs to the PPR family. PCMP-A subfamily.

It localises to the plastid. The protein resides in the chloroplast. The sequence is that of Pentatricopeptide repeat-containing protein At1g71460, chloroplastic (PCMP-A3) from Arabidopsis thaliana (Mouse-ear cress).